A 345-amino-acid chain; its full sequence is Anthranilate phosphoribosyltransferase (345 aa).

5-phospho-alpha-D-ribose 1-diphosphate contacts are provided by residues G84, 87–88 (GD), T92, 94–97 (NIST), 112–120 (KHGNRSVSS), and S124. G84 provides a ligand contact to anthranilate. S96 is a binding site for Mg(2+). N115 contributes to the anthranilate binding site. Residue R170 coordinates anthranilate. D229 and E230 together coordinate Mg(2+).

The protein belongs to the anthranilate phosphoribosyltransferase family. In terms of assembly, homodimer. Requires Mg(2+) as cofactor.

It catalyses the reaction N-(5-phospho-beta-D-ribosyl)anthranilate + diphosphate = 5-phospho-alpha-D-ribose 1-diphosphate + anthranilate. It participates in amino-acid biosynthesis; L-tryptophan biosynthesis; L-tryptophan from chorismate: step 2/5. Its function is as follows. Catalyzes the transfer of the phosphoribosyl group of 5-phosphorylribose-1-pyrophosphate (PRPP) to anthranilate to yield N-(5'-phosphoribosyl)-anthranilate (PRA). The polypeptide is Anthranilate phosphoribosyltransferase (Xanthomonas oryzae pv. oryzae (strain MAFF 311018)).